Here is a 709-residue protein sequence, read N- to C-terminus: Fatty acid oxidation complex subunit alpha (709 aa).

Residues 1–188 (MEKTFNLTRR…KMGLVNDVVP (188 aa)) form an enoyl-CoA hydratase region. Residues 308–709 (RKVKKAVILG…EMAAEKTRFF (402 aa)) form a 3-hydroxyacyl-CoA dehydrogenase region.

In the N-terminal section; belongs to the enoyl-CoA hydratase/isomerase family. This sequence in the central section; belongs to the 3-hydroxyacyl-CoA dehydrogenase family. As to quaternary structure, heterotetramer of two alpha chains (FadJ) and two beta chains (FadI).

Its subcellular location is the cytoplasm. The enzyme catalyses a (3S)-3-hydroxyacyl-CoA = a (2E)-enoyl-CoA + H2O. The catalysed reaction is a 4-saturated-(3S)-3-hydroxyacyl-CoA = a (3E)-enoyl-CoA + H2O. It catalyses the reaction a (3S)-3-hydroxyacyl-CoA + NAD(+) = a 3-oxoacyl-CoA + NADH + H(+). It carries out the reaction (3S)-3-hydroxybutanoyl-CoA = (3R)-3-hydroxybutanoyl-CoA. Its pathway is lipid metabolism; fatty acid beta-oxidation. Catalyzes the formation of a hydroxyacyl-CoA by addition of water on enoyl-CoA. Also exhibits 3-hydroxyacyl-CoA epimerase and 3-hydroxyacyl-CoA dehydrogenase activities. The sequence is that of Fatty acid oxidation complex subunit alpha from Shewanella sp. (strain MR-4).